The chain runs to 287 residues: Type 1 encapsulin shell protein EncA (287 aa).

Belongs to the encapsulin family. Family 1 subfamily. In terms of assembly, the 32 nm encapsulin nanocompartment is formed by 180 subunits; monomers form pentamers which assemble to form shells. There are 36 pores where the pentamers meet as well as 3-fold axis channels and dimer channels. The N-terminus of the protein is inside the shell.

Its subcellular location is the encapsulin nanocompartment. In terms of biological role, shell component of a type 1, iron-storage encapsulin nanocompartment. Encapsulin nanocompartments are 32 nm in diameter with an iron- and phosphorus-rich core (4Fe:1P) about 24 nm in diameter. Upon expression in E.coli most particles are 32 nm, 20% are 18 nm. The core is filled with an average of 14 dense granules, 5-6 nm in diameter that are not evenly distributed. Each nanocompartment is estimated to hold 30,000-35,000 Fe atoms. The minor proteins EncB, EncC and EncD probably lie against the interior face of the nanocompartment. This Myxococcus xanthus (strain DK1622) protein is Type 1 encapsulin shell protein EncA.